Consider the following 341-residue polypeptide: KH domain-containing RNA-binding protein QKI (341 aa).

The qua1 domain; involved in homodimerization stretch occupies residues P11 to L82. Positions Y87 to V153 constitute a KH domain. A qua2 domain; involved in RNA binding region spans residues A182–A213. Position 188 is a phosphoserine (S188). Position 227 is an omega-N-methylarginine (R227). Asymmetric dimethylarginine; by CARM1; alternate is present on R242. Residue R242 is modified to Omega-N-methylarginine; alternate. Residue R256 is modified to Omega-N-methylarginine. An SH3-binding motif is present at residues P276–P279. Positions R324 to R330 match the Nuclear localization signal motif.

It belongs to the quaking family. As to quaternary structure, homodimer; does not require RNA to homodimerize. Able to heterodimerize with BICC1. Post-translationally, methylated by PRMT1. Tyrosine phosphorylated at its C-terminus, probably by FYN. Phosphorylation leads to decreased mRNA-binding affinity, affecting transport and/or stabilization of MBP mRNA. In terms of processing, ubiquitinated by RNF6 in macrophages, leading to its degradation. Present in myelinating oligodendrocytes (at protein level).

It is found in the nucleus. Its subcellular location is the cytoplasm. In terms of biological role, RNA reader protein, which recognizes and binds specific RNAs, thereby regulating RNA metabolic processes, such as pre-mRNA splicing, circular RNA (circRNA) formation, mRNA export, mRNA stability and/or translation. Involved in various cellular processes, such as mRNA storage into stress granules, apoptosis, lipid deposition, interferon response, glial cell fate and development. Binds to the 5'-NACUAAY-N(1,20)-UAAY-3' RNA core sequence. Acts as a mRNA modification reader that specifically recognizes and binds mRNA transcripts modified by internal N(7)-methylguanine (m7G). Promotes the formation of circular RNAs (circRNAs) during the epithelial to mesenchymal transition and in cardiomyocytes: acts by binding to sites flanking circRNA-forming exons. CircRNAs are produced by back-splicing circularization of pre-mRNAs. Plays a central role in myelinization via 3 distinct mechanisms. First, acts by protecting and promoting stability of target mRNAs such as MBP, SIRT2 and CDKN1B, which promotes oligodendrocyte differentiation. Second, participates in mRNA transport by regulating the nuclear export of MBP mRNA. Finally, indirectly regulates mRNA splicing of MAG pre-mRNA during oligodendrocyte differentiation by acting as a negative regulator of MAG exon 12 alternative splicing: acts by binding to HNRNPA1 mRNA splicing factor, preventing its translation. Involved in microglia differentiation and remyelination by regulating microexon alternative splicing of the Rho GTPase pathway. Involved in macrophage differentiation: promotes monocyte differentiation by regulating pre-mRNA splicing in naive peripheral blood monocytes. Acts as an important regulator of muscle development: required for the contractile function of cardiomyocytes by regulating alternative splicing of cardiomyocyte transcripts. Acts as a negative regulator of thermogenesis by decreasing stability, nuclear export and translation of mRNAs encoding PPARGC1A and UCP1. Also required for visceral endoderm function and blood vessel development. May also play a role in smooth muscle development. In addition to its RNA-binding activity, also acts as a nuclear transcription coactivator for SREBF2/SREBP2. This Rattus norvegicus (Rat) protein is KH domain-containing RNA-binding protein QKI.